The primary structure comprises 377 residues: Methionine import ATP-binding protein MetN 2 (377 aa).

Positions Ile-25–Leu-262 constitute an ABC transporter domain. Residue Gly-59–Ser-66 participates in ATP binding.

Belongs to the ABC transporter superfamily. Methionine importer (TC 3.A.1.24) family. The complex is composed of two ATP-binding proteins (MetN), two transmembrane proteins (MetI) and a solute-binding protein (MetQ).

Its subcellular location is the cell inner membrane. The enzyme catalyses L-methionine(out) + ATP + H2O = L-methionine(in) + ADP + phosphate + H(+). It carries out the reaction D-methionine(out) + ATP + H2O = D-methionine(in) + ADP + phosphate + H(+). Functionally, part of the ABC transporter complex MetNIQ involved in methionine import. Responsible for energy coupling to the transport system. In Rhodopseudomonas palustris (strain ATCC BAA-98 / CGA009), this protein is Methionine import ATP-binding protein MetN 2.